We begin with the raw amino-acid sequence, 955 residues long: 2-oxoglutarate dehydrogenase E1 component (955 aa).

This sequence belongs to the alpha-ketoglutarate dehydrogenase family. Homodimer. Part of the 2-oxoglutarate dehydrogenase (OGDH) complex composed of E1 (2-oxoglutarate dehydrogenase), E2 (dihydrolipoamide succinyltransferase) and E3 (dihydrolipoamide dehydrogenase); the complex contains multiple copies of the three enzymatic components (E1, E2 and E3). Thiamine diphosphate serves as cofactor.

It catalyses the reaction N(6)-[(R)-lipoyl]-L-lysyl-[protein] + 2-oxoglutarate + H(+) = N(6)-[(R)-S(8)-succinyldihydrolipoyl]-L-lysyl-[protein] + CO2. Functionally, E1 component of the 2-oxoglutarate dehydrogenase (OGDH) complex which catalyzes the decarboxylation of 2-oxoglutarate, the first step in the conversion of 2-oxoglutarate to succinyl-CoA and CO(2). This Bacillus cereus (strain 03BB102) protein is 2-oxoglutarate dehydrogenase E1 component.